Here is a 241-residue protein sequence, read N- to C-terminus: MSLTLLPAVDVRDGKAVRLRQGESGSETDYGSPLEAARTWVESGAEWIHLVDLDAAFGTGNNRDQLRAIVKELGDKVNIEMSGGVRDDASLDAALEAGAARVNIGTAALENPDWTASVIKKYGDRVAVGLDVRGHTLAARGWVKEGGDLFETMKFLDSVGCSRYVVTDVARDGMMSGPNIELLREVASRTDAKVTASGGISKLDDLRNIKELAELGVDAAILGKSLYARAFTLEEALEVAR.

D10 (proton acceptor) is an active-site residue. D131 (proton donor) is an active-site residue.

The protein belongs to the HisA/HisF family.

It is found in the cytoplasm. The catalysed reaction is 1-(5-phospho-beta-D-ribosyl)-5-[(5-phospho-beta-D-ribosylamino)methylideneamino]imidazole-4-carboxamide = 5-[(5-phospho-1-deoxy-D-ribulos-1-ylimino)methylamino]-1-(5-phospho-beta-D-ribosyl)imidazole-4-carboxamide. It functions in the pathway amino-acid biosynthesis; L-histidine biosynthesis; L-histidine from 5-phospho-alpha-D-ribose 1-diphosphate: step 4/9. This is 1-(5-phosphoribosyl)-5-[(5-phosphoribosylamino)methylideneamino] imidazole-4-carboxamide isomerase from Bifidobacterium adolescentis (strain ATCC 15703 / DSM 20083 / NCTC 11814 / E194a).